The chain runs to 367 residues: DNA replication and repair protein RecF (367 aa).

30–37 (GDNAQGKT) serves as a coordination point for ATP.

It belongs to the RecF family.

The protein localises to the cytoplasm. Functionally, the RecF protein is involved in DNA metabolism; it is required for DNA replication and normal SOS inducibility. RecF binds preferentially to single-stranded, linear DNA. It also seems to bind ATP. The chain is DNA replication and repair protein RecF from Clostridium beijerinckii (strain ATCC 51743 / NCIMB 8052) (Clostridium acetobutylicum).